The sequence spans 227 residues: uncharacterized protein (227 aa).

2 helical membrane passes run 113–133 (IMLI…FIVF) and 141–161 (FGIC…NGLI).

Its subcellular location is the membrane. This is an uncharacterized protein from Dictyostelium discoideum (Social amoeba).